Reading from the N-terminus, the 731-residue chain is 1,4-alpha-glucan branching enzyme GlgB (731 aa).

D412 serves as the catalytic Nucleophile. E465 serves as the catalytic Proton donor.

This sequence belongs to the glycosyl hydrolase 13 family. GlgB subfamily. As to quaternary structure, monomer.

It catalyses the reaction Transfers a segment of a (1-&gt;4)-alpha-D-glucan chain to a primary hydroxy group in a similar glucan chain.. The protein operates within glycan biosynthesis; glycogen biosynthesis. In terms of biological role, catalyzes the formation of the alpha-1,6-glucosidic linkages in glycogen by scission of a 1,4-alpha-linked oligosaccharide from growing alpha-1,4-glucan chains and the subsequent attachment of the oligosaccharide to the alpha-1,6 position. This chain is 1,4-alpha-glucan branching enzyme GlgB, found in Bordetella bronchiseptica (strain ATCC BAA-588 / NCTC 13252 / RB50) (Alcaligenes bronchisepticus).